The primary structure comprises 68 residues: Peptide Smp13 (68 aa).

The first 23 residues, 1-23 (MKTQFAIFLITLVLFQMFSQSDA), serve as a signal peptide directing secretion. F36 carries the post-translational modification Phenylalanine amide. A propeptide spanning residues 37–68 (GKRGLGDHDDLDELFDGEISQADIDFLKEIMQ) is cleaved from the precursor.

Belongs to the non-disulfide-bridged peptide (NDBP) superfamily. Short antimicrobial peptide (group 4) family. Expressed by the venom gland.

The protein localises to the secreted. In terms of biological role, peptide with unknown function. Does not show antimicrobial activity against the Gram-positive, and Gram-negative bacteria tested, as well as against the fungus C.albicans. This chain is Peptide Smp13, found in Scorpio palmatus (Israeli golden scorpion).